Consider the following 354-residue polypeptide: Uroporphyrinogen decarboxylase (354 aa).

Substrate-binding positions include 27 to 31, Asp77, Tyr154, Thr209, and His327; that span reads RQAGR.

Belongs to the uroporphyrinogen decarboxylase family. As to quaternary structure, homodimer.

The protein localises to the cytoplasm. It carries out the reaction uroporphyrinogen III + 4 H(+) = coproporphyrinogen III + 4 CO2. It participates in porphyrin-containing compound metabolism; protoporphyrin-IX biosynthesis; coproporphyrinogen-III from 5-aminolevulinate: step 4/4. Catalyzes the decarboxylation of four acetate groups of uroporphyrinogen-III to yield coproporphyrinogen-III. In Histophilus somni (strain 2336) (Haemophilus somnus), this protein is Uroporphyrinogen decarboxylase.